The following is a 960-amino-acid chain: Glycine dehydrogenase (decarboxylating) (960 aa).

Lys709 carries the N6-(pyridoxal phosphate)lysine modification.

The protein belongs to the GcvP family. In terms of assembly, the glycine cleavage system is composed of four proteins: P, T, L and H. The cofactor is pyridoxal 5'-phosphate.

It catalyses the reaction N(6)-[(R)-lipoyl]-L-lysyl-[glycine-cleavage complex H protein] + glycine + H(+) = N(6)-[(R)-S(8)-aminomethyldihydrolipoyl]-L-lysyl-[glycine-cleavage complex H protein] + CO2. Functionally, the glycine cleavage system catalyzes the degradation of glycine. The P protein binds the alpha-amino group of glycine through its pyridoxal phosphate cofactor; CO(2) is released and the remaining methylamine moiety is then transferred to the lipoamide cofactor of the H protein. This chain is Glycine dehydrogenase (decarboxylating), found in Edwardsiella ictaluri (strain 93-146).